Reading from the N-terminus, the 367-residue chain is CCN family member 4 (367 aa).

The signal sequence occupies residues 1 to 22 (MRWFLPWTLAAVTAAAASTVLA). The region spanning 45–118 (RPQFCKWPCE…RYAIGVCAQV (74 aa)) is the IGFBP N-terminal domain. Cystine bridges form between Cys-49–Cys-73, Cys-53–Cys-75, Cys-55–Cys-76, and Cys-62–Cys-79. Asn-86 is a glycosylation site (N-linked (GlcNAc...) asparagine). 2 disulfides stabilise this stretch: Cys-87/Cys-101 and Cys-93/Cys-115. One can recognise a VWFC domain in the interval 121–186 (VGCVLDGVRY…GHCCEQWVCE (66 aa)). Asn-143 carries N-linked (GlcNAc...) asparagine glycosylation. The region spanning 215–260 (NCIAYTSPWSPCSTSCGLGVSTRISNVNAQCWPEQESRLCNLRPCD) is the TSP type-1 domain. Disulfide bonds link Cys-273–Cys-310, Cys-290–Cys-324, Cys-301–Cys-340, Cys-304–Cys-342, and Cys-309–Cys-346. The CTCK domain maps to 273-347 (CLAVYQPEAS…NACFCNLSCR (75 aa)). Residue Asn-284 is glycosylated (N-linked (GlcNAc...) asparagine). The N-linked (GlcNAc...) asparagine glycan is linked to Asn-343.

It belongs to the CCN family. Expressed in heart, kidney, lung, pancreas, placenta, ovary, small intestine and spleen. Isoform 2 is expressed predominantly in scirrhous gastric carcinoma and, weakly in placenta. Overexpression is associated with several cancers including breast cancer and colon tumors. Isoform 2 is overexpressed in scirrhous gastric carcinoma.

The protein localises to the secreted. In terms of biological role, downstream regulator in the Wnt/Frizzled-signaling pathway. Associated with cell survival. Attenuates p53-mediated apoptosis in response to DNA damage through activation of AKT kinase. Up-regulates the anti-apoptotic Bcl-X(L) protein. Adheres to skin and melanoma fibroblasts. In vitro binding to skin fibroblasts occurs through the proteoglycans, decorin and biglycan. The polypeptide is CCN family member 4 (Homo sapiens (Human)).